The sequence spans 418 residues: Translation initiation factor 2 subunit gamma (418 aa).

The tr-type G domain occupies 7–206; sequence QPEVNIGVVG…GIQKYIPTPQ (200 aa). The G1 stretch occupies residues 16–23; it reads GHVDHGKT. Mg(2+) contacts are provided by Asp-19, Thr-23, Gly-44, and Thr-46. 19–24 contributes to the GTP binding site; that stretch reads DHGKTT. Residues 44–48 are G2; the sequence is GMTIK. Residues Cys-59, Cys-62, Cys-74, and Cys-77 each contribute to the Zn(2+) site. Residues 93 to 96 are G3; sequence DAPG. GTP contacts are provided by residues 149–152 and 184–186; these read NKVD and SAL. The G4 stretch occupies residues 149-152; the sequence is NKVD. The tract at residues 184-186 is G5; sequence SAL.

This sequence belongs to the TRAFAC class translation factor GTPase superfamily. Classic translation factor GTPase family. EIF2G subfamily. In terms of assembly, heterotrimer composed of an alpha, a beta and a gamma chain. The cofactor is Mg(2+).

It catalyses the reaction GTP + H2O = GDP + phosphate + H(+). Its function is as follows. eIF-2 functions in the early steps of protein synthesis by forming a ternary complex with GTP and initiator tRNA. This Sulfurisphaera tokodaii (strain DSM 16993 / JCM 10545 / NBRC 100140 / 7) (Sulfolobus tokodaii) protein is Translation initiation factor 2 subunit gamma.